The chain runs to 288 residues: Glucose-1-phosphate thymidylyltransferase (288 aa).

Mg(2+)-binding residues include D108 and D223.

The protein belongs to the glucose-1-phosphate thymidylyltransferase family. Homotetramer. Mg(2+) is required as a cofactor.

The catalysed reaction is dTTP + alpha-D-glucose 1-phosphate + H(+) = dTDP-alpha-D-glucose + diphosphate. In terms of biological role, catalyzes the formation of dTDP-glucose, from dTTP and glucose 1-phosphate, as well as its pyrophosphorolysis. The chain is Glucose-1-phosphate thymidylyltransferase (rmlA) from Neisseria gonorrhoeae.